The following is a 738-amino-acid chain: 1,4-alpha-glucan branching enzyme GlgB (738 aa).

The Nucleophile role is filled by Asp417. Residue Glu472 is the Proton donor of the active site.

This sequence belongs to the glycosyl hydrolase 13 family. GlgB subfamily. In terms of assembly, monomer.

The catalysed reaction is Transfers a segment of a (1-&gt;4)-alpha-D-glucan chain to a primary hydroxy group in a similar glucan chain.. Its pathway is glycan biosynthesis; glycogen biosynthesis. Catalyzes the formation of the alpha-1,6-glucosidic linkages in glycogen by scission of a 1,4-alpha-linked oligosaccharide from growing alpha-1,4-glucan chains and the subsequent attachment of the oligosaccharide to the alpha-1,6 position. The protein is 1,4-alpha-glucan branching enzyme GlgB of Burkholderia pseudomallei (strain K96243).